The sequence spans 135 residues: Small ribosomal subunit protein uS11 (135 aa).

Residues 1–22 are disordered; sequence MPPKSRTAAGAKKVRRKEKKNV.

The protein belongs to the universal ribosomal protein uS11 family. As to quaternary structure, part of the 30S ribosomal subunit. Interacts with proteins S7 and S18. Binds to IF-3.

Functionally, located on the platform of the 30S subunit, it bridges several disparate RNA helices of the 16S rRNA. Forms part of the Shine-Dalgarno cleft in the 70S ribosome. The protein is Small ribosomal subunit protein uS11 of Nocardioides sp. (strain ATCC BAA-499 / JS614).